A 214-amino-acid polypeptide reads, in one-letter code: Type 4 apparatus protein DotN (214 aa).

The Zn(2+) site is built by cysteine 52, cysteine 55, cysteine 84, and cysteine 87.

As to quaternary structure, the T4BSS is a complex nanomachine composed of several subcomplexes. This subunit is part of the Type IV Coupling Complex (T4CC), a subcomplex composed of the DotLMNYZ core and the IcmSW-LvgA adapter subunits, linked by the C-terminal tail of DotL. Six DotLMNYZ hetero-pentameric units may assemble into a hexameric nanomachine, forming an inner membrane channel for effectors to pass through. Interacts directly with DotL. Interacts with DotZ.

It localises to the cytoplasm. Component of the Dot/Icm type IVB secretion system (T4BSS), which is used to inject bacterial effector proteins into eukaryotic host cells. Part of a subcomplex which recruits effector proteins and delivers them to the core transmembrane subcomplex. The sequence is that of Type 4 apparatus protein DotN from Legionella pneumophila subsp. pneumophila (strain Philadelphia 1 / ATCC 33152 / DSM 7513).